The sequence spans 459 residues: tRNA(Ile)-lysidine synthase (459 aa).

An ATP-binding site is contributed by 38-43 (SGGMDS).

Belongs to the tRNA(Ile)-lysidine synthase family.

Its subcellular location is the cytoplasm. The enzyme catalyses cytidine(34) in tRNA(Ile2) + L-lysine + ATP = lysidine(34) in tRNA(Ile2) + AMP + diphosphate + H(+). Its function is as follows. Ligates lysine onto the cytidine present at position 34 of the AUA codon-specific tRNA(Ile) that contains the anticodon CAU, in an ATP-dependent manner. Cytidine is converted to lysidine, thus changing the amino acid specificity of the tRNA from methionine to isoleucine. The chain is tRNA(Ile)-lysidine synthase from Acinetobacter baylyi (strain ATCC 33305 / BD413 / ADP1).